We begin with the raw amino-acid sequence, 196 residues long: Thymidine kinase (196 aa).

ATP contacts are provided by residues Ser-9 to Ser-16 and Asp-87 to Gln-90. The active-site Proton acceptor is the Glu-88. Zn(2+) contacts are provided by Cys-145, Cys-147, Cys-182, and His-185.

The protein belongs to the thymidine kinase family. Homotetramer.

The protein resides in the cytoplasm. The enzyme catalyses thymidine + ATP = dTMP + ADP + H(+). This Yersinia pestis protein is Thymidine kinase.